Consider the following 208-residue polypeptide: Cytidylate kinase (208 aa).

7-15 (GPAASGKGT) is a binding site for ATP.

It belongs to the cytidylate kinase family. Type 1 subfamily.

The protein localises to the cytoplasm. It catalyses the reaction CMP + ATP = CDP + ADP. It carries out the reaction dCMP + ATP = dCDP + ADP. The chain is Cytidylate kinase from Xanthobacter autotrophicus (strain ATCC BAA-1158 / Py2).